The chain runs to 205 residues: FMN-dependent NADH:quinone oxidoreductase (205 aa).

Residues S10 and 16-18 contribute to the FMN site; that span reads SVS.

This sequence belongs to the azoreductase type 1 family. Homodimer. FMN is required as a cofactor.

The catalysed reaction is 2 a quinone + NADH + H(+) = 2 a 1,4-benzosemiquinone + NAD(+). The enzyme catalyses N,N-dimethyl-1,4-phenylenediamine + anthranilate + 2 NAD(+) = 2-(4-dimethylaminophenyl)diazenylbenzoate + 2 NADH + 2 H(+). Functionally, quinone reductase that provides resistance to thiol-specific stress caused by electrophilic quinones. Its function is as follows. Also exhibits azoreductase activity. Catalyzes the reductive cleavage of the azo bond in aromatic azo compounds to the corresponding amines. This chain is FMN-dependent NADH:quinone oxidoreductase, found in Agrobacterium fabrum (strain C58 / ATCC 33970) (Agrobacterium tumefaciens (strain C58)).